A 275-amino-acid polypeptide reads, in one-letter code: Aliphatic sulfonates import ATP-binding protein SsuB 1 (275 aa).

The region spanning 34-260 is the ABC transporter domain; the sequence is ISLTGLEKSF…RHGHPGLCEL (227 aa). An ATP-binding site is contributed by 66-73; the sequence is GKSGCGKS.

Belongs to the ABC transporter superfamily. Aliphatic sulfonates importer (TC 3.A.1.17.2) family. In terms of assembly, the complex is composed of two ATP-binding proteins (SsuB), two transmembrane proteins (SsuC) and a solute-binding protein (SsuA).

Its subcellular location is the cell inner membrane. It carries out the reaction ATP + H2O + aliphatic sulfonate-[sulfonate-binding protein]Side 1 = ADP + phosphate + aliphatic sulfonateSide 2 + [sulfonate-binding protein]Side 1.. Functionally, part of the ABC transporter complex SsuABC involved in aliphatic sulfonates import. Responsible for energy coupling to the transport system. The protein is Aliphatic sulfonates import ATP-binding protein SsuB 1 of Rhizobium johnstonii (strain DSM 114642 / LMG 32736 / 3841) (Rhizobium leguminosarum bv. viciae).